The following is a 172-amino-acid chain: Zinc finger protein 580 (172 aa).

Residues 1–93 form a disordered region; it reads MLLLPPRPPH…GEPGPRKGYS (93 aa). Residues 19–30 show a composition bias toward pro residues; that stretch reads MDPPPPKAPPFP. Lysine 31 is covalently cross-linked (Glycyl lysine isopeptide (Lys-Gly) (interchain with G-Cter in SUMO2)). The segment covering 31–44 has biased composition (low complexity); it reads KAEGPSSTPSSAAG. Positions 75-86 are enriched in pro residues; sequence GPPQREAPPGEP. The segment at 92-114 adopts a C2H2-type 1 zinc-finger fold; it reads YSCPECARVFASPLRLQSHRVSH. Lysine 118 participates in a covalent cross-link: Glycyl lysine isopeptide (Lys-Gly) (interchain with G-Cter in SUMO2). 2 consecutive C2H2-type zinc fingers follow at residues 120-142 and 150-172; these read FTCGACGKAFKRSSHLSRHRATH and HTCPLCPRRFQDAAELAQHVRLH.

As to quaternary structure, interacts with SMAD2. In terms of tissue distribution, expressed in endothelial cells.

The protein resides in the nucleus. In terms of biological role, involved in the regulation of endothelial cell proliferation and migration. Mediates H(2)O(2)-induced leukocyte chemotaxis by elevating interleukin-8 production and may play a role in inflammation. May be involved in transcriptional regulation. This Homo sapiens (Human) protein is Zinc finger protein 580 (ZNF580).